A 386-amino-acid chain; its full sequence is Succinate--CoA ligase [ADP-forming] subunit beta (386 aa).

One can recognise an ATP-grasp domain in the interval 9–244; it reads KEILRKYGVP…HDEEDPLETR (236 aa). Residues Lys-46, 53-55, Glu-99, Cys-102, and Glu-107 each bind ATP; that span reads GRG. Asn-199 and Asp-213 together coordinate Mg(2+). Substrate contacts are provided by residues Asn-264 and 321 to 323; that span reads GIM.

The protein belongs to the succinate/malate CoA ligase beta subunit family. Heterotetramer of two alpha and two beta subunits. Mg(2+) is required as a cofactor.

The catalysed reaction is succinate + ATP + CoA = succinyl-CoA + ADP + phosphate. It catalyses the reaction GTP + succinate + CoA = succinyl-CoA + GDP + phosphate. It functions in the pathway carbohydrate metabolism; tricarboxylic acid cycle; succinate from succinyl-CoA (ligase route): step 1/1. Its function is as follows. Succinyl-CoA synthetase functions in the citric acid cycle (TCA), coupling the hydrolysis of succinyl-CoA to the synthesis of either ATP or GTP and thus represents the only step of substrate-level phosphorylation in the TCA. The beta subunit provides nucleotide specificity of the enzyme and binds the substrate succinate, while the binding sites for coenzyme A and phosphate are found in the alpha subunit. The sequence is that of Succinate--CoA ligase [ADP-forming] subunit beta from Rickettsia akari (strain Hartford).